The sequence spans 374 residues: Alanine racemase (374 aa).

Lysine 34 serves as the catalytic Proton acceptor; specific for D-alanine. At lysine 34 the chain carries N6-(pyridoxal phosphate)lysine. Arginine 147 is a binding site for substrate. The active-site Proton acceptor; specific for L-alanine is tyrosine 271. Methionine 319 serves as a coordination point for substrate.

Belongs to the alanine racemase family. The cofactor is pyridoxal 5'-phosphate.

The catalysed reaction is L-alanine = D-alanine. It functions in the pathway amino-acid biosynthesis; D-alanine biosynthesis; D-alanine from L-alanine: step 1/1. Its function is as follows. Catalyzes the interconversion of L-alanine and D-alanine. May also act on other amino acids. This chain is Alanine racemase (alr), found in Actinobacillus pleuropneumoniae serotype 5b (strain L20).